A 222-amino-acid chain; its full sequence is Apoptosis regulator OPG045 (222 aa).

The protein belongs to the orthopoxvirus OPG045 family. As to quaternary structure, homodimer. Interacts with host pro-apoptotic protein BCL2L11 (via BH3 domain). Interacts with host NLRP1. Interacts with host BAK.

It localises to the host mitochondrion outer membrane. The protein resides in the host cytoplasm. Its function is as follows. Plays a role in evading host innate immune response by inhibiting host inflammasome activation. Interacts with and inhibits NLR-mediated interleukin-1 beta/IL1B production in infected cells. At the host mitochondria outer membrane, interacts with the BH3 domain of host BAK and prevents BAK from binding active BAX. In turn, host apoptosis is inhibited. This chain is Apoptosis regulator OPG045 (OPG045), found in Homo sapiens (Human).